Consider the following 117-residue polypeptide: Protein P16 (117 aa).

Residues 7-24 (LYWVGGGLVLILIWLWFR) traverse the membrane as a helical segment.

It localises to the virion membrane. Protein of the infection vertex complex, which increases the vertex stability. Anchors the vertex structure to the viral membrane. Essential for viral infectivity. This is Protein P16 (XVI) from Enterobacteria phage PRD1 (Bacteriophage PRD1).